The chain runs to 469 residues: Probable glycine dehydrogenase (decarboxylating) subunit 1 (469 aa).

It belongs to the GcvP family. N-terminal subunit subfamily. As to quaternary structure, the glycine cleavage system is composed of four proteins: P, T, L and H. In this organism, the P 'protein' is a heterodimer of two subunits.

It carries out the reaction N(6)-[(R)-lipoyl]-L-lysyl-[glycine-cleavage complex H protein] + glycine + H(+) = N(6)-[(R)-S(8)-aminomethyldihydrolipoyl]-L-lysyl-[glycine-cleavage complex H protein] + CO2. Its function is as follows. The glycine cleavage system catalyzes the degradation of glycine. The P protein binds the alpha-amino group of glycine through its pyridoxal phosphate cofactor; CO(2) is released and the remaining methylamine moiety is then transferred to the lipoamide cofactor of the H protein. This is Probable glycine dehydrogenase (decarboxylating) subunit 1 from Staphylothermus marinus (strain ATCC 43588 / DSM 3639 / JCM 9404 / F1).